Consider the following 405-residue polypeptide: Coenzyme F420 hydrogenase subunit alpha (405 aa).

Residues C63, C66, C380, and C383 each coordinate Ni(2+).

The protein belongs to the [NiFe]/[NiFeSe] hydrogenase large subunit family. In terms of assembly, heterocomplex of the form (alpha(1)beta(1)gamma(1))(8). Ni(2+) serves as cofactor. Iron-sulfur cluster is required as a cofactor. It depends on FAD as a cofactor.

The catalysed reaction is oxidized coenzyme F420-(gamma-L-Glu)(n) + H2 + H(+) = reduced coenzyme F420-(gamma-L-Glu)(n). Reduces the physiological low-potential two-electron acceptor coenzyme F420, and the artificial one-electron acceptor methylviologen. The protein is Coenzyme F420 hydrogenase subunit alpha (frhA) of Methanothermobacter thermautotrophicus (strain ATCC 29096 / DSM 1053 / JCM 10044 / NBRC 100330 / Delta H) (Methanobacterium thermoautotrophicum).